A 2118-amino-acid polypeptide reads, in one-letter code: Cilia- and flagella-associated protein 65 (2118 aa).

Residues 6–26 form a helical membrane-spanning segment; the sequence is GSLRALLLAAAAAAAAAAGAV. An MSP domain is found at 615–736; the sequence is FLHSNPEFGP…HTPRLTTDLP (122 aa). Disordered stretches follow at residues 1007–1029, 1764–1909, and 1924–1958; these read APLL…LDAG, SGGS…DDFA, and AGGG…APPR. Positions 1825-1834 are enriched in gly residues; the sequence is GGAGGAPGGD. The span at 1840–1849 shows a compositional bias: low complexity; it reads RPGTPSMTAA. Basic residues predominate over residues 1850–1859; the sequence is AHHHHHHPRH. Low complexity-rich tracts occupy residues 1892–1902 and 1936–1949; these read SISGAPDPDSA and PGGS…ELAP. A coiled-coil region spans residues 2016–2045; that stretch reads AVRAAAEAARAEAEARAAAEAATKAAAEAE.

This sequence belongs to the CFAP65 family.

The protein resides in the cell projection. It localises to the cilium. It is found in the flagellum membrane. Its subcellular location is the cytoplasm. May play a role in flagellar formation and mobility. The chain is Cilia- and flagella-associated protein 65 from Chlamydomonas reinhardtii (Chlamydomonas smithii).